Consider the following 201-residue polypeptide: Nuclear protein UL4 (201 aa).

This sequence belongs to the alphaherpesvirinae HHV-1 UL4 family.

The protein localises to the host nucleus. The polypeptide is Nuclear protein UL4 (Human herpesvirus 2 (strain HG52) (HHV-2)).